The sequence spans 374 residues: Protein FAM199X (374 aa).

Positions 238-343 (YIREHSPRQR…QLKEQRQARK (106 aa)) are disordered. Residues 261–295 (SNGSTSGVSAHSSSNASMVSSTSSSTASTGSNSST) are compositionally biased toward low complexity. Basic residues predominate over residues 315-334 (DSKKRSKQRKMQQKALRKRQ). The stretch at 317 to 346 (KKRSKQRKMQQKALRKRQLKEQRQARKERL) forms a coiled coil.

It belongs to the FAM199 family.

In Danio rerio (Zebrafish), this protein is Protein FAM199X (fam199x).